A 165-amino-acid chain; its full sequence is Nucleotide-binding protein RoseRS_0530 (165 aa).

This sequence belongs to the YajQ family.

Its function is as follows. Nucleotide-binding protein. This chain is Nucleotide-binding protein RoseRS_0530, found in Roseiflexus sp. (strain RS-1).